A 103-amino-acid polypeptide reads, in one-letter code: Cyclotide vibi-I (103 aa).

The signal sequence occupies residues 1–9; it reads AAFALPAFA. The propeptide occupies 10 to 69; sequence SFEKDVITPAALEAVLNRKAPLSNIMMENDAILNVIANVKTVISNPVLEEALLKTNHGVN. The cyclopeptide (Gly-Asn) cross-link spans 70–99; it reads GIPCGESCVWIPCLTSTVGCSCKSKVCYRN. 3 cysteine pairs are disulfide-bonded: Cys-73–Cys-89, Cys-77–Cys-91, and Cys-82–Cys-96. Positions 100 to 103 are excised as a propeptide; the sequence is SLDN.

In terms of processing, this is a cyclic peptide.

Probably participates in a plant defense mechanism. This is Cyclotide vibi-I from Viola biflora (Yellow wood violet).